The primary structure comprises 562 residues: MLPLPSLRRSLLSHAWRGAGLRWKHTSSLKVTNEPILAFSQGSPERDALQKALKDLKGQMEAIPCVVGDEEVWTSDIQYQLSPFNHAHKVAKFCYADKALLNRAIDAALAARKEWDLKPMADRAQVFLKAADMLSGPRRAEVLAKTMVGQGKTVIQAEIDAAAELIDFFRFNAKFAVELEGEQPISVPPSTNHTVYRGLEGFVAAISPFNFTAIGGNLAGAPALMGNVVLWKPSDTAMLASYAVYRILREAGLPPNIIQFVPADGPTFGDTVTSSEHLCGINFTGSVPTFKHLWRQVAQNLDRFRTFPRLAGECGGKNFHFVHSSADVDSVVSGTLRSAFEYGGQKCSACSRLYVPKSLWPQIKGRLLEEHSRIKVGDPAEDFGTFFSAVIDAKAFARIKKWLEHARSSPSLSILAGGQCNESVGYYVEPCIIESKDPQEPIMKEEIFGPVLTVYVYPDDKYRETLQLVDSTTSYGLTGAVFAQDKAIVQEATRMLRNAAGNFYINDKSTGSVVGQQPFGGARASGTNDKPGGPHYILRWTSPQVIKETHKPLGDWRYSYMQ.

The N-terminal 23 residues, 1 to 23 (MLPLPSLRRSLLSHAWRGAGLRW), are a transit peptide targeting the mitochondrion. Residue K30 is modified to N6-succinyllysine. Phosphoserine is present on S43. Residue K51 is modified to N6-acetyllysine. 5 positions are modified to N6-acetyllysine; alternate: K92, K98, K113, K129, and K174. N6-succinyllysine; alternate is present on residues K92, K98, K113, K129, and K174. NAD(+)-binding positions include S207, K232, and 285–289 (GSVPT). The active-site Proton acceptor is E313. The residue at position 317 (K317) is an N6-acetyllysine. K346 carries the N6-succinyllysine modification. The Nucleophile role is filled by C347. K357 is modified (N6-acetyllysine; alternate). An N6-succinyllysine; alternate modification is found at K357. N6-acetyllysine is present on residues K364 and K375. An N6-succinyllysine modification is found at K394. E446 contacts NAD(+). K461 bears the N6-acetyllysine mark. Residue K508 is modified to N6-acetyllysine; alternate. K508 is modified (N6-succinyllysine; alternate). S512 is a substrate binding site. N6-acetyllysine is present on residues K530 and K551.

This sequence belongs to the aldehyde dehydrogenase family. As to quaternary structure, homodimer. Post-translationally, acetylation of Lys-98, Lys-113 and Lys-401 is observed in liver mitochondria from fasted mice but not from fed mice.

It localises to the mitochondrion matrix. The catalysed reaction is L-glutamate 5-semialdehyde + NAD(+) + H2O = L-glutamate + NADH + 2 H(+). It participates in amino-acid degradation; L-proline degradation into L-glutamate; L-glutamate from L-proline: step 2/2. Irreversible conversion of delta-1-pyrroline-5-carboxylate (P5C), derived either from proline or ornithine, to glutamate. This is a necessary step in the pathway interconnecting the urea and tricarboxylic acid cycles. The preferred substrate is glutamic gamma-semialdehyde, other substrates include succinic, glutaric and adipic semialdehydes. In Mus musculus (Mouse), this protein is Delta-1-pyrroline-5-carboxylate dehydrogenase, mitochondrial (Aldh4a1).